The primary structure comprises 424 residues: Endoglucanase (424 aa).

A signal peptide spans 1–19; that stretch reads MHRCMPLVAASMAALMLAG. Residue cysteine 20 is the site of N-palmitoyl cysteine attachment. Cysteine 20 is lipidated: S-diacylglycerol cysteine. Residues 20–43 constitute a propeptide that is removed on maturation; sequence CGGGDGDTTLSTAAATDTTTLKTA. Glutamate 247 serves as the catalytic Proton donor. Glutamate 359 functions as the Nucleophile in the catalytic mechanism.

This sequence belongs to the glycosyl hydrolase 5 (cellulase A) family.

The protein localises to the cell membrane. The catalysed reaction is Endohydrolysis of (1-&gt;4)-beta-D-glucosidic linkages in cellulose, lichenin and cereal beta-D-glucans.. The polypeptide is Endoglucanase (egl) (Ralstonia nicotianae (strain ATCC BAA-1114 / GMI1000) (Ralstonia solanacearum)).